Here is a 170-residue protein sequence, read N- to C-terminus: uncharacterized protein (170 aa).

A helical transmembrane segment spans residues 96–116; that stretch reads FSAISIGSFPIVLFLSLFFFD.

It is found in the membrane. This is an uncharacterized protein from Borreliella burgdorferi (strain ATCC 35210 / DSM 4680 / CIP 102532 / B31) (Borrelia burgdorferi).